Reading from the N-terminus, the 251-residue chain is Flap endonuclease Xni (251 aa).

Asp104 contacts Mg(2+). Positions 160–249 (VLPRQLPDYW…IDGNLQQLRL (90 aa)) constitute a 5'-3' exonuclease domain. K(+)-binding residues include Leu171, Ala172, Pro180, Val182, and Ile185. An interaction with DNA region spans residues 184–189 (GIGPKS).

This sequence belongs to the Xni family. The cofactor is Mg(2+). It depends on K(+) as a cofactor.

In terms of biological role, has flap endonuclease activity. During DNA replication, flap endonucleases cleave the 5'-overhanging flap structure that is generated by displacement synthesis when DNA polymerase encounters the 5'-end of a downstream Okazaki fragment. This Salmonella schwarzengrund (strain CVM19633) protein is Flap endonuclease Xni.